A 229-amino-acid chain; its full sequence is Interleukin-22 receptor subunit alpha-2 (229 aa).

An N-terminal signal peptide occupies residues 1–19; the sequence is MPKHCFLGLLIMLLTTATE. Fibronectin type-III domains follow at residues 28 to 127 and 128 to 229; these read KPQK…TKLD and PPVV…VQIP. N-linked (GlcNAc...) asparagine glycosylation occurs at N54. Disulfide bonds link C76/C84 and C204/C225.

Belongs to the type II cytokine receptor family.

The protein resides in the secreted. Functionally, receptor for IL22. Binds to IL22, prevents interaction with the functional IL-22R complex and blocks the activity of IL22 (in vitro). May play an important role as an IL22 antagonist in the regulation of inflammatory responses. The chain is Interleukin-22 receptor subunit alpha-2 (Il22ra2) from Rattus norvegicus (Rat).